The following is a 230-amino-acid chain: Cytidylate kinase (230 aa).

Residue 16–24 (GPASAGKST) participates in ATP binding.

Belongs to the cytidylate kinase family. Type 1 subfamily.

The protein localises to the cytoplasm. It carries out the reaction CMP + ATP = CDP + ADP. It catalyses the reaction dCMP + ATP = dCDP + ADP. The polypeptide is Cytidylate kinase (Lactobacillus gasseri (strain ATCC 33323 / DSM 20243 / BCRC 14619 / CIP 102991 / JCM 1131 / KCTC 3163 / NCIMB 11718 / NCTC 13722 / AM63)).